A 366-amino-acid chain; its full sequence is Flagellar P-ring protein (366 aa).

Positions 1–27 (MKSKYSIFCMFLLRGFIFLGTVFSLNS) are cleaved as a signal peptide.

Belongs to the FlgI family. The basal body constitutes a major portion of the flagellar organelle and consists of four rings (L,P,S, and M) mounted on a central rod.

It is found in the periplasm. The protein localises to the bacterial flagellum basal body. Its function is as follows. Assembles around the rod to form the L-ring and probably protects the motor/basal body from shearing forces during rotation. This is Flagellar P-ring protein from Leptospira interrogans serogroup Icterohaemorrhagiae serovar copenhageni (strain Fiocruz L1-130).